We begin with the raw amino-acid sequence, 132 residues long: Snaclec bothroinsularin subunit alpha (132 aa).

3 disulfide bridges follow: cysteine 2/cysteine 13, cysteine 30/cysteine 127, and cysteine 102/cysteine 119. Residues 9–128 (YGQYCYKFFQ…CGQQNPFVCK (120 aa)) enclose the C-type lectin domain.

The protein belongs to the snaclec family. In terms of assembly, heterodimer of subunits alpha and beta; disulfide-linked. In terms of tissue distribution, expressed by the venom gland.

It localises to the secreted. In terms of biological role, thrombin and prothrombin (F2) inhibitor. The IC(50) of thrombin-induced platelet aggregation and fibrinocoagulation is 62 and 35 nM, respectively. Its inhibitory activity is at least 10-fold lower than that observed for other thrombin inhibitors. In Bothrops insularis (Golden lancehead), this protein is Snaclec bothroinsularin subunit alpha.